A 294-amino-acid polypeptide reads, in one-letter code: Large ribosomal subunit protein uL4m (294 aa).

The disordered stretch occupies residues 120–139 (VRGGGRKPWQQKGSGRARHG). Arg147 carries the post-translational modification Omega-N-methylarginine.

It belongs to the universal ribosomal protein uL4 family. In terms of assembly, component of the mitochondrial ribosome large subunit (39S) which comprises a 16S rRNA and about 50 distinct proteins. Interacts with MIEF1 upstream open reading frame protein.

It localises to the mitochondrion. This is Large ribosomal subunit protein uL4m (MRPL4) from Bos taurus (Bovine).